A 319-amino-acid polypeptide reads, in one-letter code: MKKIAVLTSGGDAPGMNAAVRAVVRYGIKNGLEVIGVRRGYSGLIDGDFVKLEYKDVAGITEKGGTILRTSRCEEFKTEEGREAAAKQLKKHGIEGLVVIGGEGSLTGAHLLHEEHNIPVVGIPATIDNDIGLTDMCIGVDTCLNTVMDAIQKLKDTASSHERAFIVEVMGRHSGYIALMAGLVTGAEAIIIPEIPVDYSQLADRILQERRRGKINSIIVVAEGAASAYTVARHLEYRIGYETRITILGHVQRGGSPTAFDRRLALSMGVEAVEALLDGEADVMIALQGNKFVRVPIMEALSTKKTIDKKLYEIAHLLS.

Gly-11 is a binding site for ATP. 21–25 (RAVVR) contacts ADP. ATP is bound by residues 72–73 (RC) and 102–105 (GEGS). Glu-103 contacts Mg(2+). Substrate is bound at residue 126–128 (TID). Catalysis depends on Asp-128, which acts as the Proton acceptor. Lys-155 contacts ADP. Substrate is bound by residues Arg-163 and 170 to 172 (MGR). ADP-binding positions include 186-188 (GAE), Arg-212, and 214-216 (KIN). Substrate-binding positions include Glu-223, Arg-244, and 250–253 (HVQR).

This sequence belongs to the phosphofructokinase type A (PFKA) family. ATP-dependent PFK group I subfamily. Prokaryotic clade 'B1' sub-subfamily. Homotetramer. It depends on Mg(2+) as a cofactor.

The protein localises to the cytoplasm. The catalysed reaction is beta-D-fructose 6-phosphate + ATP = beta-D-fructose 1,6-bisphosphate + ADP + H(+). It functions in the pathway carbohydrate degradation; glycolysis; D-glyceraldehyde 3-phosphate and glycerone phosphate from D-glucose: step 3/4. Its activity is regulated as follows. Allosterically activated by ADP and other diphosphonucleosides, and allosterically inhibited by phosphoenolpyruvate. Its function is as follows. Catalyzes the phosphorylation of D-fructose 6-phosphate to fructose 1,6-bisphosphate by ATP, the first committing step of glycolysis. In Thermotoga neapolitana (strain ATCC 49049 / DSM 4359 / NBRC 107923 / NS-E), this protein is ATP-dependent 6-phosphofructokinase.